The chain runs to 402 residues: MDRTETRFRKRGQITEKITTSRQPQPQNEQSPQRSTSGYPLQEVVDDEVLGPSAPGVDPSPPCRSLGWKRKREWSDESAEEPEKELAPEPEETWVVEMLCGLKMKLKQQRVSPILPEHHKGFNSQLAPGVDPSPPHRSFCWKRKMEWWDESEESLEEEPRKVLAPEPEEIWVAEMLCGLKMKLKRRRVSLVLPEHHEAFNRLLEDPVIKRFLAWDKDLRVSDKYLLAMVIAYFSRAGFPSWQYQRIHFFLALYLANDMEEDDEDSKQNIFHFLYGKNRSRIPLLRKRWFQLGRSMNPRARKKRSRIPLLRKRRFQLGRSMNPRARKNRSRIPLLRKRRFQLGRSMNLRARKNRSQIVLFQKRRFQFFCSMSGRAWVSPEELEEIQAYDPEHWVWARDRAHLS.

Residues Met1–Glu89 are disordered. The span at Glu16 to Tyr39 shows a compositional bias: polar residues. Over residues Asp76–Glu89 the composition is skewed to acidic residues.

It belongs to the Speedy/Ringo family.

The protein is Speedy protein E5 (SPDYE5) of Homo sapiens (Human).